Consider the following 369-residue polypeptide: Cytoplasmic tRNA 2-thiolation protein 1 (369 aa).

The protein belongs to the TtcA family. CTU1/NCS6/ATPBD3 subfamily.

It is found in the cytoplasm. It participates in tRNA modification; 5-methoxycarbonylmethyl-2-thiouridine-tRNA biosynthesis. Its function is as follows. Plays a central role in 2-thiolation of mcm(5)S(2)U at tRNA wobble positions of tRNA(Lys), tRNA(Glu) and tRNA(Gln). Directly binds tRNAs and probably acts by catalyzing adenylation of tRNAs, an intermediate required for 2-thiolation. It is unclear whether it acts as a sulfurtransferase that transfers sulfur from thiocarboxylated URM1 onto the uridine of tRNAs at wobble position. Prior mcm(5) tRNA modification by the elongator complex is required for 2-thiolation. May also be involved in protein urmylation. The polypeptide is Cytoplasmic tRNA 2-thiolation protein 1 (Cryptococcus neoformans var. neoformans serotype D (strain JEC21 / ATCC MYA-565) (Filobasidiella neoformans)).